The chain runs to 1435 residues: DNA polymerase III PolC-type (1435 aa).

The region spanning Tyr-404–Phe-562 is the Exonuclease domain.

This sequence belongs to the DNA polymerase type-C family. PolC subfamily.

It is found in the cytoplasm. The enzyme catalyses DNA(n) + a 2'-deoxyribonucleoside 5'-triphosphate = DNA(n+1) + diphosphate. Functionally, required for replicative DNA synthesis. This DNA polymerase also exhibits 3' to 5' exonuclease activity. In Mycoplasmopsis pulmonis (strain UAB CTIP) (Mycoplasma pulmonis), this protein is DNA polymerase III PolC-type.